Consider the following 186-residue polypeptide: Peptidyl-tRNA hydrolase (186 aa).

Tyr-15 lines the tRNA pocket. His-20 serves as the catalytic Proton acceptor. TRNA is bound by residues Tyr-64, Asn-66, and Asn-112.

Belongs to the PTH family. In terms of assembly, monomer.

The protein localises to the cytoplasm. The enzyme catalyses an N-acyl-L-alpha-aminoacyl-tRNA + H2O = an N-acyl-L-amino acid + a tRNA + H(+). In terms of biological role, hydrolyzes ribosome-free peptidyl-tRNAs (with 1 or more amino acids incorporated), which drop off the ribosome during protein synthesis, or as a result of ribosome stalling. Functionally, catalyzes the release of premature peptidyl moieties from peptidyl-tRNA molecules trapped in stalled 50S ribosomal subunits, and thus maintains levels of free tRNAs and 50S ribosomes. The chain is Peptidyl-tRNA hydrolase from Azobacteroides pseudotrichonymphae genomovar. CFP2.